Reading from the N-terminus, the 257-residue chain is Homeobox protein EMX1 (257 aa).

The segment at residues Pro-159–Lys-218 is a DNA-binding region (homeobox). Residues Arg-216–Asp-257 form a disordered region. Over residues Gln-217–Lys-230 the composition is skewed to basic and acidic residues.

It belongs to the EMX homeobox family. In terms of assembly, interacts with WRD11 (via the N-terminal and the central portion of the protein); the interaction associates EMX1 with GLI3. Cerebral cortex. Expressed in the olfactory bulbs.

It localises to the nucleus. Functionally, transcription factor, which in cooperation with EMX2, acts to generate the boundary between the roof and archipallium in the developing brain. May function in combinations with OTX1/2 to specify cell fates in the developing central nervous system. The polypeptide is Homeobox protein EMX1 (Emx1) (Mus musculus (Mouse)).